A 551-amino-acid chain; its full sequence is uncharacterized protein (551 aa).

Residues 1–7 are Cytoplasmic-facing; that stretch reads MKKNSSV. A helical transmembrane segment spans residues 8–28; the sequence is VFFLVGLSQFVTMAFLIIGSI. Residues 29–88 are Vacuolar-facing; the sequence is TAPIFKQIGYSKYDEITYGTFGYCKEGSCSKASYNYHPDELSDSDSNWKLNSNARSILGK. The chain crosses the membrane as a helical span at residues 89–109; the sequence is IIFITPIAAGLNFLGFLCTIM. The Cytoplasmic segment spans residues 110 to 135; sequence SVLLINVLSSDRVGSASAIMFFVNLT. Residues 136–156 traverse the membrane as a helical segment; sequence FSTLGFLSASLICIVVFLLFY. Residues 157–160 are Vacuolar-facing; that stretch reads PHVT. Residues 161–181 form a helical membrane-spanning segment; it reads WCSWVLIPGAALSLLVIPLIF. The Cytoplasmic portion of the chain corresponds to 182–551; sequence SAYSRSSGSR…TSLNNPYGFR (370 aa). Ser-224 and Ser-232 each carry phosphoserine. Residues 280 to 341 are disordered; that stretch reads AKDMENSNGS…NGSNTSNNIN (62 aa). The segment covering 307 to 320 has biased composition (polar residues); it reads TSTYSVIESESGLK. A compositionally biased stretch (low complexity) spans 321 to 341; it reads NGSVSNNYVRNNGSNTSNNIN. At Ser-363 the chain carries Phosphoserine.

As to quaternary structure, forms homo dimers or homooligomers in MCC microdomains. Interacts with BOI2 and RHO3, two key regulators of secretion.

It localises to the vacuole membrane. The protein resides in the cell membrane. Protein involved in secretion and cell wall organization. Contributes to cell surface-related functions as a auxiliary component of MCC/eisosome that specifically interacts with the secretory pathway. This is an uncharacterized protein from Saccharomyces cerevisiae (strain ATCC 204508 / S288c) (Baker's yeast).